A 552-amino-acid polypeptide reads, in one-letter code: CTP synthase (552 aa).

The interval M1 to L270 is amidoligase domain. S13 is a CTP binding site. S13 serves as a coordination point for UTP. ATP-binding positions include S14–I19 and D71. Mg(2+) is bound by residues D71 and E144. CTP is bound by residues D151–E153, K191–Q196, and K227. UTP is bound by residues K191–Q196 and K227. The region spanning Q295 to P548 is the Glutamine amidotransferase type-1 domain. Residue G357 participates in L-glutamine binding. Residue C384 is the Nucleophile; for glutamine hydrolysis of the active site. L-glutamine contacts are provided by residues L385 to Q388, E408, and R474. Catalysis depends on residues H521 and E523.

This sequence belongs to the CTP synthase family. Homotetramer.

It catalyses the reaction UTP + L-glutamine + ATP + H2O = CTP + L-glutamate + ADP + phosphate + 2 H(+). The catalysed reaction is L-glutamine + H2O = L-glutamate + NH4(+). The enzyme catalyses UTP + NH4(+) + ATP = CTP + ADP + phosphate + 2 H(+). It participates in pyrimidine metabolism; CTP biosynthesis via de novo pathway; CTP from UDP: step 2/2. Its activity is regulated as follows. Allosterically activated by GTP, when glutamine is the substrate; GTP has no effect on the reaction when ammonia is the substrate. The allosteric effector GTP functions by stabilizing the protein conformation that binds the tetrahedral intermediate(s) formed during glutamine hydrolysis. Inhibited by the product CTP, via allosteric rather than competitive inhibition. Functionally, catalyzes the ATP-dependent amination of UTP to CTP with either L-glutamine or ammonia as the source of nitrogen. Regulates intracellular CTP levels through interactions with the four ribonucleotide triphosphates. The chain is CTP synthase from Acidovorax ebreus (strain TPSY) (Diaphorobacter sp. (strain TPSY)).